The sequence spans 423 residues: Adenylosuccinate synthetase (423 aa).

Residues 12–18 (GDEGKGK) and 40–42 (GHT) contribute to the GTP site. Asp-13 (proton acceptor) is an active-site residue. The Mg(2+) site is built by Asp-13 and Gly-40. IMP contacts are provided by residues 13–16 (DEGK), 38–41 (NAGH), Thr-129, Arg-143, Gln-224, Thr-239, and Arg-303. His-41 acts as the Proton donor in catalysis. 299-305 (ATTGRKR) provides a ligand contact to substrate. Residues Arg-305, 331–333 (KGD), and 412–414 (SVG) each bind GTP.

Belongs to the adenylosuccinate synthetase family. As to quaternary structure, homodimer. Requires Mg(2+) as cofactor.

It is found in the cytoplasm. It catalyses the reaction IMP + L-aspartate + GTP = N(6)-(1,2-dicarboxyethyl)-AMP + GDP + phosphate + 2 H(+). It participates in purine metabolism; AMP biosynthesis via de novo pathway; AMP from IMP: step 1/2. In terms of biological role, plays an important role in the de novo pathway of purine nucleotide biosynthesis. Catalyzes the first committed step in the biosynthesis of AMP from IMP. The polypeptide is Adenylosuccinate synthetase (Christiangramia forsetii (strain DSM 17595 / CGMCC 1.15422 / KT0803) (Gramella forsetii)).